The primary structure comprises 367 residues: Alginate lyase (367 aa).

The first 24 residues, 1 to 24 (MTIFKRISSPALLALALFGGAAHA), serve as a signal peptide directing secretion. Substrate-binding positions include 63-64 (SK), 136-137 (HT), and Tyr-254.

Belongs to the polysaccharide lyase 5 family.

The protein resides in the periplasm. It carries out the reaction Eliminative cleavage of alginate to give oligosaccharides with 4-deoxy-alpha-L-erythro-hex-4-enuronosyl groups at their non-reducing ends and beta-D-mannuronate at their reducing end.. Functionally, catalyzes the depolymerization of alginate by cleaving the beta-1,4 glycosidic bond between two adjacent sugar residues via a beta-elimination mechanism. May serve to degrade mislocalized alginate that is trapped in the periplasmic space. In Pseudomonas putida (strain ATCC 700007 / DSM 6899 / JCM 31910 / BCRC 17059 / LMG 24140 / F1), this protein is Alginate lyase.